The following is a 158-amino-acid chain: Protein Smg homolog (158 aa).

The protein belongs to the Smg family.

In Thioalkalivibrio sulfidiphilus (strain HL-EbGR7), this protein is Protein Smg homolog.